The primary structure comprises 98 residues: NADH-ubiquinone oxidoreductase chain 4L (98 aa).

3 helical membrane-spanning segments follow: residues 2 to 22, 29 to 49, and 61 to 81; these read PSISTNITLAFTIALTGMLVF, SLLCLEGMMLAMFILSILFIM, and ILLLVLAACEAAIGLALLVMV.

This sequence belongs to the complex I subunit 4L family. In terms of assembly, core subunit of respiratory chain NADH dehydrogenase (Complex I) which is composed of 45 different subunits.

It localises to the mitochondrion inner membrane. It catalyses the reaction a ubiquinone + NADH + 5 H(+)(in) = a ubiquinol + NAD(+) + 4 H(+)(out). Core subunit of the mitochondrial membrane respiratory chain NADH dehydrogenase (Complex I) which catalyzes electron transfer from NADH through the respiratory chain, using ubiquinone as an electron acceptor. Part of the enzyme membrane arm which is embedded in the lipid bilayer and involved in proton translocation. The polypeptide is NADH-ubiquinone oxidoreductase chain 4L (MT-ND4L) (Lepilemur sahamalazensis (Sahamalaza sportive lemur)).